The sequence spans 530 residues: Probable flavin-containing monooxygenase 1 (530 aa).

Residues 17–21, Glu38, 46–47, and 58–59 contribute to the FAD site; these read GAGVS, VW, and QS. An NADP(+)-binding site is contributed by 219-222; sequence SAID.

The protein belongs to the FMO family. FAD is required as a cofactor.

In terms of biological role, required for the establishment of systemic acquired resistance (SAR). Not involved in local defense mechanisms. Confers a salicylic acid-dependent (SA) resistance to virulent pathogens such as P.syringae pv tomato and H.parasitica. The sequence is that of Probable flavin-containing monooxygenase 1 (FMO1) from Arabidopsis thaliana (Mouse-ear cress).